The primary structure comprises 206 residues: CASP-like protein 1F1 (206 aa).

The Cytoplasmic segment spans residues 1–43 (MCFQFSILYTCYLAHFGVFPRKYLVMAGIEAKFQQNPPLGTHK). A helical membrane pass occupies residues 44–64 (LFLGAHICLRILTVTATLTAA). The Extracellular segment spans residues 65-92 (WMMITSKQTVEVYGIQVEAKYSYSSAFK). Residues 93–113 (FFSYANAIACGCSVLTLFPAF) traverse the membrane as a helical segment. The Cytoplasmic portion of the chain corresponds to 114–124 (SLFYRGSTPMK). Residues 125–145 (FFFLFLHDLCMMSLVLAGCAA) form a helical membrane-spanning segment. Topologically, residues 146–177 (ATAIGYVGRYGNNHAGWMAICDQFDEYCNRIR) are extracellular. Residues 178–198 (LSLMFSYLAFVFILMLTIMSA) traverse the membrane as a helical segment. The Cytoplasmic segment spans residues 199–206 (NKSREIRV).

This sequence belongs to the Casparian strip membrane proteins (CASP) family. As to quaternary structure, homodimer and heterodimers.

It localises to the cell membrane. The chain is CASP-like protein 1F1 from Vitis vinifera (Grape).